Here is a 439-residue protein sequence, read N- to C-terminus: Proline--tRNA ligase (439 aa).

It belongs to the class-II aminoacyl-tRNA synthetase family. ProS type 2 subfamily. In terms of assembly, homodimer.

Its subcellular location is the cytoplasm. The enzyme catalyses tRNA(Pro) + L-proline + ATP = L-prolyl-tRNA(Pro) + AMP + diphosphate. Functionally, catalyzes the attachment of proline to tRNA(Pro) in a two-step reaction: proline is first activated by ATP to form Pro-AMP and then transferred to the acceptor end of tRNA(Pro). This is Proline--tRNA ligase from Nitrobacter winogradskyi (strain ATCC 25391 / DSM 10237 / CIP 104748 / NCIMB 11846 / Nb-255).